The sequence spans 93 residues: Putative regulatory protein Fnod_1678 (93 aa).

This sequence belongs to the RemA family.

This Fervidobacterium nodosum (strain ATCC 35602 / DSM 5306 / Rt17-B1) protein is Putative regulatory protein Fnod_1678.